The primary structure comprises 580 residues: Keratin, type II cytoskeletal 5 (580 aa).

The tract at residues Met1–Glu161 is head. Residues Ser5, Ser8, Ser16, and Ser21 each carry the phosphoserine modification. Thr24 carries the post-translational modification Phosphothreonine; by CDK1. Residues Ser26, Ser36, Ser47, Ser61, Ser68, Ser72, Ser75, and Ser79 each carry the phosphoserine modification. Thr145 carries the phosphothreonine; by CDK1 modification. Thr160 is subject to Phosphothreonine; by AURKB. A coil 1A region spans residues Glu162–Leu197. Residues Glu162–Leu475 enclose the IF rod domain. Positions Gln198–Tyr216 are linker 1. The interval Ile217–Gln309 is coil 1B. The segment at Thr310 to Ile332 is linker 12. Positions Ile333 to Glu471 are coil 2. The tail stretch occupies residues Glu472–Ser580. Arg526 is modified (omega-N-methylarginine). The interval Phe555 to Ser580 is disordered. Over residues Ser563–Ser580 the composition is skewed to low complexity.

This sequence belongs to the intermediate filament family. As to quaternary structure, heterodimer of a type I and a type II keratin. Heterodimer with type I keratin KRT25 leading to the formation of keratin intermediate filament (KIF) network. Forms a heterodimer (via 2B domains) with KRT14 (via 2B domains). Interacts with PLEC isoform 1C, when in a heterodimer with KRT14. Interacts with TCHP. Interacts with EPPK1. Interacts with AMELX. Interacts with PKP1 (via N-terminus) and PKP2. Post-translationally, phosphorylated by CDK1, AURKB and Rho-kinase, phosphorylation is regulated by the cell cycle. Thr-24 phosphorylation, mediated by CDK1, peaks during prometaphase or metaphase cells with phosphorylated filamentous structures evident throughout the cytoplasm during early mitosis. CDK1 phosphorylates Thr-24 in mitotic cells at the site of injury. O-glycosylated. As to expression, expressed in the corneal epithelium (at protein level). Expressed in the epidermis of the ear (at protein level). Expressed in the basal and spinous layers of the skin at birth (at protein level).

It is found in the cytoplasm. Functionally, required for the formation of keratin intermediate filaments in the basal epidermis and maintenance of the skin barrier in response to mechanical stress. Regulates the recruitment of Langerhans cells to the epidermis, potentially by modulation of the abundance of macrophage chemotactic cytokines, macrophage inflammatory cytokines and CTNND1 localization in keratinocytes. The polypeptide is Keratin, type II cytoskeletal 5 (Mus musculus (Mouse)).